Here is a 1285-residue protein sequence, read N- to C-terminus: MSGPLEGADGGGDPRPGESFCSGGVPSPGAPQHRSCPGPSLADDTDANSNGSSGNESNGHESRGASQRSSHSSSSGNGKDSALLETTESSKSTNSQSPSPPSSSIAYSLLSASSEQDNPSTSGCSSEQSARARTQKELMTALRELKLRLPPGHRGKGRSGTLATLQYALACVKQVQANQEYYQQWSLEEGEPCAMDMSTYTLEELEHITSEYTLRNQDTFSVAVSFLTGRIVYISEQAGVLLRCKRDVFRGARFSELLAPQDVGVFYGSTAPFRLPTWGTGTSAGSGLKDFTQEKSVFCRIRGGPDRDPGPRYHPFRLTPYVTKIRVSDGAPAQPCCLLIAERIHSGYEAPRIPPDKRIFTTRHTPSCLFQDVDERAAPLLGYLPQDLLGAPVLLFLHPEDRPLMLAIHKKILQLAGQPFDHSPIRFCARNGEYVTMDTSWAGFVHPWSRKVAFVLGRHKVRTAPLNEDVFTPPAPSPAPSLDSDIQELSEQIHRLLLQPVHSSSPTGPCGIGPLMSPRPLHSPGSSSDSNGGDAEGPGPPAPVTFQQICKDVHLVKHQGQQLFIESRARPPPRPRLLGKAKGLPCQSLDPELEVVPMPNQAPLALALEEAERKEASSCSYQQINCLDSILRYLESCNIPSTTKRKCASSSSCTASSASDDDKQRTGPVPVGAKKDPSSTVLSGEGASPRKEPVVGGTLSPLTLANKAESVVSITSQCSFSSTIVHVGDKKPPESDIIMMEDLPGLAPGPVPSPAPSPTVAPDPAPDAYRPVGLTKAVLSLHTQKEEQAFLSRFKDLGRLRGLDSSSATPSAPGCHHGPVPPGRRHHCRSKAKRSRHHHTPRAEAPCCVSHPSPVPPSGPWPPPPSTTPFPAVVQPYPLPVFSARGGPQPLPPAPTPMPPATFPTPLVTPMVALVLPNYLFPTPPSYPYGLSQAPVEEPPSPASHSPSPSLTPLTPSPPHHPDSPLFNSRCSSPLQLNLLQLEESPRTEGGAVAGGPGSSAGPPPPTEEAAEPEARLVEVTESSNQDALSGSSDLLELLLQEDSRSGTGSAASGSLGSGLGSGSGSGSHEGGSTSASITRSSQSSHTSKYFGSIDSSEAEAGAVQARIELGDQVIKYVLQDPIWLLMANADQHVMMTYQVPSRDRASVLKQDRERLRTMQKQQPRFSEDQRRELGAVHSWVRKGQLPQALDVMACVDCSSSIQDPGHSDDPLFSELDGLGLEPMEEGGGEGGGGGGGGGEGEGGEEAQAHIGVKVSSSQDSAMDEEEQGGSSSSPALPAEENSTS.

The tract at residues M1–T134 is disordered. The interaction with BTRC stretch occupies residues M1–P151. 2 stretches are compositionally biased toward low complexity: residues N48–S57 and G64–E115. Positions Q116–A132 are enriched in polar residues. T121 carries the post-translational modification Phosphothreonine; by CSNK1E. A phosphoserine; by CSNK1E mark is found at S122 and S126. Positions L138–L147 match the Nuclear export signal 1 motif. PAS domains are found at residues I208–L275 and Y348–Q414. Residues H422 to P465 form the PAC domain. The Nuclear export signal 2 motif lies at L489–L498. Disordered regions lie at residues S503 to V544 and T643 to V694. 2 stretches are compositionally biased toward low complexity: residues S523–G533 and A648–A658. The required for phosphorylation by CSNK1E stretch occupies residues E592–S811. A phosphoserine mark is found at S657, S659, S700, and S811. 2 disordered regions span residues G802 to T867 and L931 to S1030. Positions V820–R836 match the Nuclear localization signal motif. Positions G823–T840 are enriched in basic residues. A compositionally biased stretch (pro residues) spans S853–T867. Low complexity predominate over residues A943 to L954. Positions F967–L979 are enriched in polar residues. A phosphoserine mark is found at S972 and S973. The Nuclear export signal 3 motif lies at L975–L982. The LXXLL motif lies at L1036–L1040. The segment covering R1045–S1055 has biased composition (low complexity). 2 disordered regions span residues R1045 to F1091 and I1202 to S1285. Residues L1056–E1070 are compositionally biased toward gly residues. Residues G1071–S1088 show a composition bias toward low complexity. The CRY binding domain stretch occupies residues S1142 to S1285. Residues G1229 to G1241 are compositionally biased toward gly residues. The segment covering G1269 to S1285 has biased composition (polar residues).

As to quaternary structure, homodimer. Component of the circadian core oscillator, which includes the CRY proteins, CLOCK or NPAS2, BMAL1 or BMAL2, CSNK1D and/or CSNK1E, TIMELESS, and the PER proteins. Interacts directly with TIMELESS, PER2, PER3, CRY1 and CRY2. Interacts with BMAL1 and CLOCK. Interacts with GPRASP1. Interacts (phosphorylated) with BTRC and FBXW11; the interactions trigger proteasomal degradation. Interacts with NONO, WDR5 and SFPQ. Interacts with USP2. Interacts with HNF4A. Phosphorylated on serine residues by CSNK1D, CSNK1E and probably also by CSNK1G2. Phosphorylation by CSNK1D or CSNK1E promotes nuclear location of PER proteins as well as ubiquitination and subsequent degradation. May be dephosphorylated by PP1. Post-translationally, ubiquitinated; requires phosphorylation by CSNK1E and interaction with BTRC and FBXW11. Deubiquitinated by USP2. In terms of tissue distribution, expressed in the brain, mainly in the suprachiasmatic nucleus (SCN). Expression also found in the harderian gland, lung, eye, intestine, liver and skeletal muscle.

Its subcellular location is the nucleus. It localises to the cytoplasm. Transcriptional repressor which forms a core component of the circadian clock. The circadian clock, an internal time-keeping system, regulates various physiological processes through the generation of approximately 24 hour circadian rhythms in gene expression, which are translated into rhythms in metabolism and behavior. It is derived from the Latin roots 'circa' (about) and 'diem' (day) and acts as an important regulator of a wide array of physiological functions including metabolism, sleep, body temperature, blood pressure, endocrine, immune, cardiovascular, and renal function. Consists of two major components: the central clock, residing in the suprachiasmatic nucleus (SCN) of the brain, and the peripheral clocks that are present in nearly every tissue and organ system. Both the central and peripheral clocks can be reset by environmental cues, also known as Zeitgebers (German for 'timegivers'). The predominant Zeitgeber for the central clock is light, which is sensed by retina and signals directly to the SCN. The central clock entrains the peripheral clocks through neuronal and hormonal signals, body temperature and feeding-related cues, aligning all clocks with the external light/dark cycle. Circadian rhythms allow an organism to achieve temporal homeostasis with its environment at the molecular level by regulating gene expression to create a peak of protein expression once every 24 hours to control when a particular physiological process is most active with respect to the solar day. Transcription and translation of core clock components (CLOCK, NPAS2, BMAL1, BMAL2, PER1, PER2, PER3, CRY1 and CRY2) plays a critical role in rhythm generation, whereas delays imposed by post-translational modifications (PTMs) are important for determining the period (tau) of the rhythms (tau refers to the period of a rhythm and is the length, in time, of one complete cycle). A diurnal rhythm is synchronized with the day/night cycle, while the ultradian and infradian rhythms have a period shorter and longer than 24 hours, respectively. Disruptions in the circadian rhythms contribute to the pathology of cardiovascular diseases, cancer, metabolic syndromes and aging. A transcription/translation feedback loop (TTFL) forms the core of the molecular circadian clock mechanism. Transcription factors, CLOCK or NPAS2 and BMAL1 or BMAL2, form the positive limb of the feedback loop, act in the form of a heterodimer and activate the transcription of core clock genes and clock-controlled genes (involved in key metabolic processes), harboring E-box elements (5'-CACGTG-3') within their promoters. The core clock genes: PER1/2/3 and CRY1/2 which are transcriptional repressors form the negative limb of the feedback loop and interact with the CLOCK|NPAS2-BMAL1|BMAL2 heterodimer inhibiting its activity and thereby negatively regulating their own expression. This heterodimer also activates nuclear receptors NR1D1/2 and RORA/B/G, which form a second feedback loop and which activate and repress BMAL1 transcription, respectively. Regulates circadian target genes expression at post-transcriptional levels, but may not be required for the repression at transcriptional level. Controls PER2 protein decay. Represses CRY2 preventing its repression on CLOCK/BMAL1 target genes such as FXYD5 and SCNN1A in kidney and PPARA in liver. Besides its involvement in the maintenance of the circadian clock, has an important function in the regulation of several processes. Participates in the repression of glucocorticoid receptor NR3C1/GR-induced transcriptional activity by reducing the association of NR3C1/GR to glucocorticoid response elements (GREs) by BMAL1:CLOCK. Plays a role in the modulation of the neuroinflammatory state via the regulation of inflammatory mediators release, such as CCL2 and IL6. In spinal astrocytes, negatively regulates the MAPK14/p38 and MAPK8/JNK MAPK cascades as well as the subsequent activation of NFkappaB. Coordinately regulates the expression of multiple genes that are involved in the regulation of renal sodium reabsorption. Can act as gene expression activator in a gene and tissue specific manner, in kidney enhances WNK1 and SLC12A3 expression in collaboration with CLOCK. Modulates hair follicle cycling. Represses the CLOCK-BMAL1 induced transcription of BHLHE40/DEC1. The protein is Period circadian protein homolog 1 (PER1) of Spalax judaei (Judean Mountains blind mole rat).